The chain runs to 255 residues: 1-(5-phosphoribosyl)-5-[(5-phosphoribosylamino)methylideneamino] imidazole-4-carboxamide isomerase (255 aa).

The active-site Proton acceptor is aspartate 8. Aspartate 129 functions as the Proton donor in the catalytic mechanism.

This sequence belongs to the HisA/HisF family.

Its subcellular location is the cytoplasm. It carries out the reaction 1-(5-phospho-beta-D-ribosyl)-5-[(5-phospho-beta-D-ribosylamino)methylideneamino]imidazole-4-carboxamide = 5-[(5-phospho-1-deoxy-D-ribulos-1-ylimino)methylamino]-1-(5-phospho-beta-D-ribosyl)imidazole-4-carboxamide. It participates in amino-acid biosynthesis; L-histidine biosynthesis; L-histidine from 5-phospho-alpha-D-ribose 1-diphosphate: step 4/9. The polypeptide is 1-(5-phosphoribosyl)-5-[(5-phosphoribosylamino)methylideneamino] imidazole-4-carboxamide isomerase (Prochlorococcus marinus (strain MIT 9211)).